Reading from the N-terminus, the 266-residue chain is Eukaryotic translation initiation factor 3 subunit J (266 aa).

2 disordered regions span residues 1 to 111 and 217 to 266; these read MAPS…EKDA and NEKM…DDFM. The span at 26–44 shows a compositional bias: acidic residues; the sequence is DEEEEDVLDSWDAAEDSEV. Positions 40-82 form a coiled coil; the sequence is EDSEVEREKAAKAAEAKAKAEAEAAANKKSKAQRIQEKKAQRK. Composition is skewed to basic and acidic residues over residues 45–61 and 73–85; these read EREK…KAEA and RIQE…KADA. Residues 86–97 are compositionally biased toward acidic residues; sequence DAEDSDDSDEDE. Composition is skewed to basic and acidic residues over residues 98 to 111 and 218 to 230; these read AERR…EKDA and EKMK…DKGN. Residues 254–266 show a composition bias toward acidic residues; sequence SYDDDGLDDDDFM.

Belongs to the eIF-3 subunit J family. In terms of assembly, component of the eukaryotic translation initiation factor 3 (eIF-3) complex.

It is found in the cytoplasm. Functionally, component of the eukaryotic translation initiation factor 3 (eIF-3) complex, which is involved in protein synthesis of a specialized repertoire of mRNAs and, together with other initiation factors, stimulates binding of mRNA and methionyl-tRNAi to the 40S ribosome. The eIF-3 complex specifically targets and initiates translation of a subset of mRNAs involved in cell proliferation. The polypeptide is Eukaryotic translation initiation factor 3 subunit J (hcr1) (Aspergillus niger (strain ATCC MYA-4892 / CBS 513.88 / FGSC A1513)).